Consider the following 163-residue polypeptide: Phosphopantetheine adenylyltransferase (163 aa).

S11 provides a ligand contact to substrate. Residues 11–12 (SF) and H19 each bind ATP. Substrate is bound by residues K43, A76, and R90. ATP contacts are provided by residues 91 to 93 (GLR), E101, and 126 to 132 (WQALSSS).

The protein belongs to the bacterial CoaD family. In terms of assembly, homohexamer. The cofactor is Mg(2+).

Its subcellular location is the cytoplasm. It carries out the reaction (R)-4'-phosphopantetheine + ATP + H(+) = 3'-dephospho-CoA + diphosphate. The protein operates within cofactor biosynthesis; coenzyme A biosynthesis; CoA from (R)-pantothenate: step 4/5. In terms of biological role, reversibly transfers an adenylyl group from ATP to 4'-phosphopantetheine, yielding dephospho-CoA (dPCoA) and pyrophosphate. The polypeptide is Phosphopantetheine adenylyltransferase (Streptococcus pyogenes serotype M6 (strain ATCC BAA-946 / MGAS10394)).